We begin with the raw amino-acid sequence, 1156 residues long: Reverse gyrase 1 (1156 aa).

The RG N-terminal-type zinc finger occupies Met1–Asn38. Positions 10, 13, 28, and 31 each coordinate Zn(2+). ATP is bound by residues Gln86 and Ala103–Thr110. Residues Ile90–Pro277 form the Helicase ATP-binding domain. A DEAD box motif is present at residues Asp184–Asp187. The tract at residues Ile570–Val1156 is topoisomerase I. A Toprim domain is found at Thr574–Ile736. Glu580 serves as a coordination point for Mg(2+). The segment at Ile655–Ser682 adopts an RG C-terminal-type zinc-finger fold. Cys658, Cys661, Cys672, and Cys675 together coordinate Zn(2+). Asp705 provides a ligand contact to Mg(2+). Residues Asn752–Ser1143 enclose the Topo IA-type catalytic domain. Tyr895 acts as the O-(5'-phospho-DNA)-tyrosine intermediate in catalysis.

This sequence in the N-terminal section; belongs to the DEAD box helicase family. DDVD subfamily. It in the C-terminal section; belongs to the type IA topoisomerase family. Monomer. Zn(2+) is required as a cofactor. Mg(2+) serves as cofactor.

The protein localises to the cytoplasm. It carries out the reaction ATP + H2O = ADP + phosphate + H(+). In terms of biological role, modifies the topological state of DNA by introducing positive supercoils in an ATP-dependent process, increasing the linking number in steps of +1. Binds to single-stranded DNA, transiently cleaves and then rejoins the ends, introducing a positive supercoil in the process. The scissile phosphodiester is attacked by the catalytic tyrosine of the enzyme, resulting in the formation of a DNA-(5'-phosphotyrosyl)-enzyme intermediate. Probably involved in rewinding DNA strands in regions of the chromosome that have opened up to allow replication, transcription, DNA repair and/or for DNA protection. This is Reverse gyrase 1 from Sulfurisphaera tokodaii (strain DSM 16993 / JCM 10545 / NBRC 100140 / 7) (Sulfolobus tokodaii).